The following is a 353-amino-acid chain: Phosphoribosylformylglycinamidine cyclo-ligase (353 aa).

It belongs to the AIR synthase family.

The protein resides in the cytoplasm. The enzyme catalyses 2-formamido-N(1)-(5-O-phospho-beta-D-ribosyl)acetamidine + ATP = 5-amino-1-(5-phospho-beta-D-ribosyl)imidazole + ADP + phosphate + H(+). The protein operates within purine metabolism; IMP biosynthesis via de novo pathway; 5-amino-1-(5-phospho-D-ribosyl)imidazole from N(2)-formyl-N(1)-(5-phospho-D-ribosyl)glycinamide: step 2/2. This is Phosphoribosylformylglycinamidine cyclo-ligase from Pseudomonas aeruginosa (strain ATCC 15692 / DSM 22644 / CIP 104116 / JCM 14847 / LMG 12228 / 1C / PRS 101 / PAO1).